Reading from the N-terminus, the 453-residue chain is Kynurenine 3-monooxygenase (453 aa).

It belongs to the aromatic-ring hydroxylase family. KMO subfamily. The cofactor is FAD.

It catalyses the reaction L-kynurenine + NADPH + O2 + H(+) = 3-hydroxy-L-kynurenine + NADP(+) + H2O. Its pathway is cofactor biosynthesis; NAD(+) biosynthesis; quinolinate from L-kynurenine: step 1/3. In terms of biological role, catalyzes the hydroxylation of L-kynurenine (L-Kyn) to form 3-hydroxy-L-kynurenine (L-3OHKyn). Required for synthesis of quinolinic acid. The protein is Kynurenine 3-monooxygenase of Salinispora tropica (strain ATCC BAA-916 / DSM 44818 / JCM 13857 / NBRC 105044 / CNB-440).